Consider the following 520-residue polypeptide: MAKIGRALISVSEKTGVVEFSRALAGYGVEILSTGGTAKLLREAGIAVKDVSEFTGFPEMLDGRVKTLHPKVHGGILGMRENPAHVAKMQEHGIEPIDMVVVNLYPFEATVAKEDCTMEDAIENIDIGGPTMLRSAAKNNRDVTVVVDHADYAVVLDEMKNSGGSVSCETNFRLAVKVYQHTAAYDGAISNWLGARTGDGVAAFPDTLTLQYKLAQGMRYGENPHQSGAFYVEKGSKEASISTARQIQGKELSYNNIGDTDAALECVKQFTEPACVIVKHANPCGVALGANIMEAYDKAYKTDPESSFGGIIAFNRELDESTARAIVERQFVEVIIAPKVTEAASEVVAAKKNVRLMECGFWPENPAPRFDYKRVNGGMLVQDADLELFTELKVVTKRAPTDKEMEDLLFTWRVAKFVKSNAIVYGRDNSTVGVGAGQMSRVNSARIAAIKAEHAGIPVQGAVMASDAFFPFRDGLDNAAAVGVTAVIQPGGSMRDAEVIAAADEHGIAMVFTAMRHFRH.

The MGS-like domain maps to 1 to 147 (MAKIGRALIS…KNNRDVTVVV (147 aa)).

Belongs to the PurH family.

The catalysed reaction is (6R)-10-formyltetrahydrofolate + 5-amino-1-(5-phospho-beta-D-ribosyl)imidazole-4-carboxamide = 5-formamido-1-(5-phospho-D-ribosyl)imidazole-4-carboxamide + (6S)-5,6,7,8-tetrahydrofolate. The enzyme catalyses IMP + H2O = 5-formamido-1-(5-phospho-D-ribosyl)imidazole-4-carboxamide. It functions in the pathway purine metabolism; IMP biosynthesis via de novo pathway; 5-formamido-1-(5-phospho-D-ribosyl)imidazole-4-carboxamide from 5-amino-1-(5-phospho-D-ribosyl)imidazole-4-carboxamide (10-formyl THF route): step 1/1. The protein operates within purine metabolism; IMP biosynthesis via de novo pathway; IMP from 5-formamido-1-(5-phospho-D-ribosyl)imidazole-4-carboxamide: step 1/1. The chain is Bifunctional purine biosynthesis protein PurH from Geobacter sp. (strain M21).